The following is a 1700-amino-acid chain: Rho guanine nucleotide exchange factor 28 (1700 aa).

The interval 288 to 335 (TERATMPSGAAETEEEVRNLESGRSPSEEEEDGQLVKSQADGPSEQED) is disordered. 3 positions are modified to phosphoserine: S312, S314, and S478. A disordered region spans residues 483–525 (VADSEEEGRSEPPICYAVGSQSSPRTGLPGGDELDSFDANTEP). S623 bears the Phosphoserine mark. A Phorbol-ester/DAG-type zinc finger spans residues 651–698 (RHQFVPGTFSGVLQCSGCDKTLLGKESLQCANCKANTHKGCKDTVPPC). The span at 709–720 (NKPQTILGSSSV) shows a compositional bias: polar residues. Disordered regions lie at residues 709–761 (NKPQ…VPGT) and 774–799 (ESEG…GSSP). A compositionally biased stretch (low complexity) spans 728–737 (LSLHPSPSMP). The segment covering 774–783 (ESEGDSNSWR) has biased composition (polar residues). In terms of domain architecture, DH spans 848–1043 (KRQDVIFELM…KDMIAAVDLK (196 aa)). The region spanning 1085–1187 (ALLHDGLVYW…WMRRIQQAVE (103 aa)) is the PH domain. Residues 1186 to 1207 (VESCPEEEGGRTSESDEERRKA) are disordered. The span at 1193–1207 (EGGRTSESDEERRKA) shows a compositional bias: basic and acidic residues. Positions 1294–1303 (DVSQPSEEGP) are interaction with PTK2/FAK1; required for regulation of axonal branching and synapse formation. The tract at residues 1369-1380 (IIQAIQNLTRLL) is mediates cytoplasmic retention and interaction with YWHAH. The interaction with microtubules stretch occupies residues 1421 to 1700 (QEKSRYLEKH…DGAEENIVYL (280 aa)). The stretch at 1473–1522 (ERECQSQEELLLRHRSELDHQLQEYQQNLERLREGQRMVERERQRMRDQQ) forms a coiled coil. The RNA-binding stretch occupies residues 1493–1524 (QLQEYQQNLERLREGQRMVERERQRMRDQQGL). S1535 carries the post-translational modification Phosphoserine. Positions 1563-1576 (FLNDAFTHMSLNTS) are mediates cytoplasmic retention and interaction with MAPK8IP1. The interval 1574-1598 (NTSNKPNPSGAPWDAHPPGGSHLDL) is disordered. Phosphoserine is present on S1604. A disordered region spans residues 1612-1700 (VSQPSDVNSE…DGAEENIVYL (89 aa)). The span at 1613 to 1623 (SQPSDVNSELW) shows a compositional bias: polar residues. Basic and acidic residues predominate over residues 1633–1642 (ARQESIKDSC). Residues 1647–1672 (DLNSFQTESPDPQDSNQRGPQPQTLI) show a composition bias toward polar residues.

As to quaternary structure, homooligomer; forms cytoplasmic aggregates. Forms a complex with MAPK8 and MAPK8IP1. Interacts with RHOA. Interacts with microtubules. Interacts with YWHAE and YWHAH. Interacts with PTK2/FAK1. Interacts with NEFL. Interacts with CTNND2; prevents interaction with RHOA. Phosphorylated on tyrosine upon stimulation of cells by laminin.

It localises to the cytoplasm. The protein localises to the cell membrane. Its function is as follows. Functions as a RHOA-specific guanine nucleotide exchange factor regulating signaling pathways downstream of integrins and growth factor receptors. Functions in axonal branching, synapse formation and dendritic morphogenesis. Also functions in focal adhesion formation, cell motility and B-lymphocytes activation. May regulate NEFL expression and aggregation and play a role in apoptosis. The protein is Rho guanine nucleotide exchange factor 28 (Arhgef28) of Rattus norvegicus (Rat).